Consider the following 385-residue polypeptide: Prophage integrase IntS (385 aa).

Residues 91 to 172 (NSFSAIYKEW…RCGEVFRYAI (82 aa)) enclose the Core-binding (CB) domain. In terms of domain architecture, Tyr recombinase spans 195-373 (KNFPFLPADQ…QYLDKRREMM (179 aa)). Active-site residues include arginine 234, lysine 261, histidine 324, arginine 327, and histidine 350. Tyrosine 360 functions as the O-(3'-phospho-DNA)-tyrosine intermediate in the catalytic mechanism.

The protein belongs to the 'phage' integrase family.

Functionally, integrase is necessary for integration of the phage into the host genome by site-specific recombination. In conjunction with excisionase, integrase is also necessary for excision of the prophage from the host genome. The sequence is that of Prophage integrase IntS (intS) from Escherichia coli (strain K12).